The primary structure comprises 291 residues: 33 kDa chaperonin (291 aa).

2 disulfides stabilise this stretch: cysteine 235-cysteine 237 and cysteine 268-cysteine 271.

This sequence belongs to the HSP33 family. In terms of processing, under oxidizing conditions two disulfide bonds are formed involving the reactive cysteines. Under reducing conditions zinc is bound to the reactive cysteines and the protein is inactive.

The protein resides in the cytoplasm. In terms of biological role, redox regulated molecular chaperone. Protects both thermally unfolding and oxidatively damaged proteins from irreversible aggregation. Plays an important role in the bacterial defense system toward oxidative stress. The polypeptide is 33 kDa chaperonin (Streptococcus agalactiae serotype III (strain NEM316)).